Here is a 274-residue protein sequence, read N- to C-terminus: 3-methyl-2-oxobutanoate hydroxymethyltransferase (274 aa).

2 residues coordinate Mg(2+): aspartate 49 and aspartate 88. 3-methyl-2-oxobutanoate contacts are provided by residues aspartate 49–serine 50, aspartate 88, and lysine 118. A Mg(2+)-binding site is contributed by glutamate 120. Catalysis depends on glutamate 187, which acts as the Proton acceptor.

It belongs to the PanB family. In terms of assembly, homodecamer; pentamer of dimers. Mg(2+) serves as cofactor.

It is found in the cytoplasm. The enzyme catalyses 3-methyl-2-oxobutanoate + (6R)-5,10-methylene-5,6,7,8-tetrahydrofolate + H2O = 2-dehydropantoate + (6S)-5,6,7,8-tetrahydrofolate. It functions in the pathway cofactor biosynthesis; (R)-pantothenate biosynthesis; (R)-pantoate from 3-methyl-2-oxobutanoate: step 1/2. Catalyzes the reversible reaction in which hydroxymethyl group from 5,10-methylenetetrahydrofolate is transferred onto alpha-ketoisovalerate to form ketopantoate. In Rhodopseudomonas palustris (strain BisB5), this protein is 3-methyl-2-oxobutanoate hydroxymethyltransferase.